The chain runs to 98 residues: HssA/B-like protein 50 (98 aa).

Disordered stretches follow at residues 1–26 and 68–98; these read MTLF…SFGS and TRGS…CCGI. Over residues 84 to 98 the composition is skewed to gly residues; the sequence is GHGGMGGGNGSCCGI.

This sequence belongs to the hssA/B family.

The protein is HssA/B-like protein 50 (hssl50) of Dictyostelium discoideum (Social amoeba).